The chain runs to 543 residues: Limonene hydroxylase (543 aa).

Residues 232–464 enclose the Sigma-54 factor interaction domain; it reads VVTYNPSFEK…LRNVIERAFL (233 aa). Residues 260–267 and 324–333 each bind ATP; these read GETGSGKE and ADGGTLFLDE.

The enzyme catalyses (4S)-limonene + reduced [NADPH--hemoprotein reductase] + O2 = (1S,5R)-carveol + oxidized [NADPH--hemoprotein reductase] + H2O + H(+). It carries out the reaction (4S)-limonene + reduced [NADPH--hemoprotein reductase] + O2 = (4S)-perillyl alcohol + oxidized [NADPH--hemoprotein reductase] + H2O + H(+). The catalysed reaction is perillyl alcohol + NAD(+) = perillyl aldehyde + NADH + H(+). It catalyses the reaction (1S,5R)-carveol + NADP(+) = (R)-carvone + NADPH + H(+). In terms of biological role, involved in limonene hydroxylation to a mixture of carveol and perillyl alcohol as well as in dehydrogenation of these products to carvone and perillyl aldehyde. Aromatic alcohols containing an isopropyl or isopropenyl group at ring position 4 also served as substrates for the dehydrogenase activity. In Geobacillus stearothermophilus (Bacillus stearothermophilus), this protein is Limonene hydroxylase.